We begin with the raw amino-acid sequence, 322 residues long: Methionyl-tRNA formyltransferase (322 aa).

Residue 113-116 (SLLP) coordinates (6S)-5,6,7,8-tetrahydrofolate.

The protein belongs to the Fmt family.

It catalyses the reaction L-methionyl-tRNA(fMet) + (6R)-10-formyltetrahydrofolate = N-formyl-L-methionyl-tRNA(fMet) + (6S)-5,6,7,8-tetrahydrofolate + H(+). Functionally, attaches a formyl group to the free amino group of methionyl-tRNA(fMet). The formyl group appears to play a dual role in the initiator identity of N-formylmethionyl-tRNA by promoting its recognition by IF2 and preventing the misappropriation of this tRNA by the elongation apparatus. This chain is Methionyl-tRNA formyltransferase, found in Bacteroides thetaiotaomicron (strain ATCC 29148 / DSM 2079 / JCM 5827 / CCUG 10774 / NCTC 10582 / VPI-5482 / E50).